Reading from the N-terminus, the 535-residue chain is UDP-glycosyltransferase stmC (535 aa).

N-linked (GlcNAc...) asparagine glycosylation is found at Asn70 and Asn422. Residues 506–526 (ASNLDLYIVCIAFVAVPVGVA) form a helical membrane-spanning segment.

It belongs to the glycosyltransferase 28 family.

It localises to the membrane. The enzyme catalyses stromemycin aglycone + UDP-alpha-D-glucose = stromemycin + UDP + H(+). It carries out the reaction exophillate aglycone + UDP-alpha-D-glucose = exophillate + UDP + H(+). The protein operates within mycotoxin biosynthesis. Functionally, UDP-glycosyltransferase; part of the gene cluster that mediates the biosynthesis of stromemycin, a depside C-glucoside with two unsaturated C9 side chains belonging to aromatic polyketide glycosides. Acts as the tailoring enzyme responsible for 3-C-glucosylation of bininalkenylresorcylic acid produced by the combined action of the HR-PKS stmA and the NR-PKS stmB to yield stromemycin. Possesses a relatively strict acceptor specificity towards bininalkenylresorcylic acid for C-glycosylation, but is able to use several donors including UDP-alpha-D-galactose, UDP-alpha-D-xylose, UDP-alpha-D-4-keto-6-deoxyglucose, UDP-alpha-D-quinovose, and UDP-beta-L-rhamnose. In Aspergillus ustus, this protein is UDP-glycosyltransferase stmC.